A 138-amino-acid polypeptide reads, in one-letter code: Large ribosomal subunit protein uL16 (138 aa).

Residues 1–15 (MLSPRKVKYRKKQRG) are compositionally biased toward basic residues. The segment at 1–21 (MLSPRKVKYRKKQRGRLSGEA) is disordered.

Belongs to the universal ribosomal protein uL16 family. In terms of assembly, part of the 50S ribosomal subunit.

Functionally, binds 23S rRNA and is also seen to make contacts with the A and possibly P site tRNAs. This Borrelia recurrentis (strain A1) protein is Large ribosomal subunit protein uL16.